A 284-amino-acid chain; its full sequence is MAITSEKKKNLKSLDKIDIKLLEKTIRALLQHIRSSDKPIEKEKVYIQVNTFQPVEKESLRRPSKVFLPHRIMHVTDACLIVKDSQQTYQDLVEQQGLDEVITKVLSIPRLKLKYKTIREKCELRDSHNLFLVDDRVLKYIPLLMGKVFEQKKIKPFPISVLQKKETLRNQVARCLHSTYLKLSAGTSHTILCGLATQTNEQLLENITTVLKCLLTNFIPKGWSAIDNVAIKTADSASLPIWTSDTNLAAHKRHIVHIQDARPLKKSELRAQKRGSSGEGKGNK.

The disordered stretch occupies residues 264 to 284; that stretch reads LKKSELRAQKRGSSGEGKGNK.

Belongs to the universal ribosomal protein uL1 family. Highly divergent. As to quaternary structure, component of the 90S pre-ribosomes.

Its subcellular location is the nucleus. It is found in the nucleolus. Involved in rRNA-processing and ribosome biosynthesis. In Schizosaccharomyces pombe (strain 972 / ATCC 24843) (Fission yeast), this protein is Putative ribosome biogenesis protein C306.07c.